A 329-amino-acid polypeptide reads, in one-letter code: Acetyl-coenzyme A carboxylase carboxyl transferase subunit alpha (329 aa).

The CoA carboxyltransferase C-terminal domain maps to 40–294; it reads QLESLAARRR…RAAIERHLEQ (255 aa).

The protein belongs to the AccA family. In terms of assembly, acetyl-CoA carboxylase is a heterohexamer composed of biotin carboxyl carrier protein (AccB), biotin carboxylase (AccC) and two subunits each of ACCase subunit alpha (AccA) and ACCase subunit beta (AccD).

The protein resides in the cytoplasm. It catalyses the reaction N(6)-carboxybiotinyl-L-lysyl-[protein] + acetyl-CoA = N(6)-biotinyl-L-lysyl-[protein] + malonyl-CoA. It participates in lipid metabolism; malonyl-CoA biosynthesis; malonyl-CoA from acetyl-CoA: step 1/1. Its function is as follows. Component of the acetyl coenzyme A carboxylase (ACC) complex. First, biotin carboxylase catalyzes the carboxylation of biotin on its carrier protein (BCCP) and then the CO(2) group is transferred by the carboxyltransferase to acetyl-CoA to form malonyl-CoA. The protein is Acetyl-coenzyme A carboxylase carboxyl transferase subunit alpha of Synechococcus sp. (strain CC9605).